Here is a 436-residue protein sequence, read N- to C-terminus: 3-ketoacyl-CoA thiolase (436 aa).

The Acyl-thioester intermediate role is filled by Cys-99. Residues His-392 and Cys-422 each act as proton acceptor in the active site.

It belongs to the thiolase-like superfamily. Thiolase family. In terms of assembly, heterotetramer of two alpha chains (FadJ) and two beta chains (FadI).

The protein localises to the cytoplasm. The enzyme catalyses an acyl-CoA + acetyl-CoA = a 3-oxoacyl-CoA + CoA. Its pathway is lipid metabolism; fatty acid beta-oxidation. Functionally, catalyzes the final step of fatty acid oxidation in which acetyl-CoA is released and the CoA ester of a fatty acid two carbons shorter is formed. The polypeptide is 3-ketoacyl-CoA thiolase (Shigella boydii serotype 18 (strain CDC 3083-94 / BS512)).